A 1088-amino-acid chain; its full sequence is RNA-directed RNA polymerase (1088 aa).

A RdRp catalytic domain is found at 501-687 (LSYGDVTRFL…AKRYIAGGKI (187 aa)).

Belongs to the reoviridae RNA-directed RNA polymerase family. As to quaternary structure, interacts with VP3 (Potential). Interacts with VP2; this interaction activates VP1. Interacts with NSP5; this interaction is probably necessary for the formation of functional virus factories. Interacts with NSP2; this interaction is weak. Mg(2+) serves as cofactor.

It is found in the virion. The catalysed reaction is RNA(n) + a ribonucleoside 5'-triphosphate = RNA(n+1) + diphosphate. RNA-directed RNA polymerase that is involved in both transcription and genome replication. Together with VP3 capping enzyme, forms an enzyme complex positioned near the channels situated at each of the five-fold vertices of the core. Following infection, the outermost layer of the virus is lost, leaving a double-layered particle (DLP) made up of the core and VP6 shell. VP1 then catalyzes the transcription of fully conservative plus-strand genomic RNAs that are extruded through the DLP's channels into the cytoplasm where they function as mRNAs for translation of viral proteins. One copy of each of the viral (+)RNAs is also recruited during core assembly, together with newly synthesized polymerase complexes and VP2. The polymerase of these novo-formed particles catalyzes the synthesis of complementary minus-strands leading to dsRNA formation. To do so, the polymerase specifically recognizes and binds 4 bases 5'-UGUG-3' in the conserved 3'-sequence of plus-strand RNA templates. VP2 presumably activates the autoinhibited VP1-RNA complex to coordinate packaging and genome replication. Once dsRNA synthesis is complete, the polymerase switches to the transcriptional mode, thus providing secondary transcription. In Rotavirus A (strain RVA/SA11-Both/G3P5B[2]) (RV-A), this protein is RNA-directed RNA polymerase.